We begin with the raw amino-acid sequence, 403 residues long: Poly(rC)-binding protein 4 (403 aa).

KH domains follow at residues 17–67 (TLTL…TITG), 101–154 (PVTL…TVSG), and 241–293 (TSSQ…TITG).

As to expression, widely expressed, with highest levels in testis and lowest in heart.

The protein localises to the cytoplasm. Single-stranded nucleic acid binding protein that binds preferentially to oligo dC. The sequence is that of Poly(rC)-binding protein 4 (Pcbp4) from Mus musculus (Mouse).